Reading from the N-terminus, the 116-residue chain is UPF0102 protein IL0423 (116 aa).

The protein belongs to the UPF0102 family.

In Idiomarina loihiensis (strain ATCC BAA-735 / DSM 15497 / L2-TR), this protein is UPF0102 protein IL0423.